The sequence spans 320 residues: Malate dehydrogenase (320 aa).

NAD(+)-binding positions include 10-15 (GSGMIG) and Asp-34. Substrate contacts are provided by Arg-83 and Arg-89. NAD(+) is bound by residues Asn-96 and 119-121 (ITN). Substrate is bound by residues Asn-121 and Arg-152. His-176 (proton acceptor) is an active-site residue.

Belongs to the LDH/MDH superfamily. MDH type 3 family.

It catalyses the reaction (S)-malate + NAD(+) = oxaloacetate + NADH + H(+). Its function is as follows. Catalyzes the reversible oxidation of malate to oxaloacetate. This chain is Malate dehydrogenase, found in Brucella melitensis biotype 1 (strain ATCC 23456 / CCUG 17765 / NCTC 10094 / 16M).